A 216-amino-acid chain; its full sequence is Imidazole glycerol phosphate synthase subunit HisH (216 aa).

Residues 2–216 enclose the Glutamine amidotransferase type-1 domain; sequence RVAIIDYGSG…FIANFLKWKP (215 aa). Cysteine 88 serves as the catalytic Nucleophile. Residues histidine 196 and glutamate 198 contribute to the active site.

In terms of assembly, heterodimer of HisH and HisF.

It is found in the cytoplasm. The catalysed reaction is 5-[(5-phospho-1-deoxy-D-ribulos-1-ylimino)methylamino]-1-(5-phospho-beta-D-ribosyl)imidazole-4-carboxamide + L-glutamine = D-erythro-1-(imidazol-4-yl)glycerol 3-phosphate + 5-amino-1-(5-phospho-beta-D-ribosyl)imidazole-4-carboxamide + L-glutamate + H(+). It catalyses the reaction L-glutamine + H2O = L-glutamate + NH4(+). It participates in amino-acid biosynthesis; L-histidine biosynthesis; L-histidine from 5-phospho-alpha-D-ribose 1-diphosphate: step 5/9. In terms of biological role, IGPS catalyzes the conversion of PRFAR and glutamine to IGP, AICAR and glutamate. The HisH subunit catalyzes the hydrolysis of glutamine to glutamate and ammonia as part of the synthesis of IGP and AICAR. The resulting ammonia molecule is channeled to the active site of HisF. The polypeptide is Imidazole glycerol phosphate synthase subunit HisH (Brucella melitensis biotype 1 (strain ATCC 23456 / CCUG 17765 / NCTC 10094 / 16M)).